The sequence spans 130 residues: MAEQQYYGTGRRKTSSARVFLRPGSGDIKVNGRSLDEYFGRETARMIVRQPLELVDATEQFDVQVTVAGGGPSGQAGAIRHGITRALVQYDEALKQPLSKAGYVTRDARMVERKKIGLHKARRATQFSKR.

It belongs to the universal ribosomal protein uS9 family.

This chain is Small ribosomal subunit protein uS9, found in Alkalilimnicola ehrlichii (strain ATCC BAA-1101 / DSM 17681 / MLHE-1).